The primary structure comprises 282 residues: NADPH-dependent 7-cyano-7-deazaguanine reductase (282 aa).

Position 88–90 (88–90 (IES)) interacts with substrate. An NADPH-binding site is contributed by 90–91 (SK). Residue Cys-190 is the Thioimide intermediate of the active site. The Proton donor role is filled by Asp-197. 229-230 (HE) provides a ligand contact to substrate. Residue 258–259 (RG) participates in NADPH binding.

This sequence belongs to the GTP cyclohydrolase I family. QueF type 2 subfamily. Homodimer.

The protein resides in the cytoplasm. It carries out the reaction 7-aminomethyl-7-carbaguanine + 2 NADP(+) = 7-cyano-7-deazaguanine + 2 NADPH + 3 H(+). It functions in the pathway tRNA modification; tRNA-queuosine biosynthesis. In terms of biological role, catalyzes the NADPH-dependent reduction of 7-cyano-7-deazaguanine (preQ0) to 7-aminomethyl-7-deazaguanine (preQ1). The protein is NADPH-dependent 7-cyano-7-deazaguanine reductase of Escherichia coli O81 (strain ED1a).